The sequence spans 148 residues: Lysozyme-like protein 1 (148 aa).

An N-terminal signal peptide occupies residues 1–19 (MKSVGVFALIISFSIVAES). A C-type lysozyme domain is found at 20 to 148 (KIYTRCKLAK…SEWKRGCEVS (129 aa)). Intrachain disulfides connect C25-C145, C49-C133, C83-C98, and C94-C112. Residue E54 is part of the active site. N58 carries an N-linked (GlcNAc...) asparagine glycan. Residue D71 is part of the active site.

It belongs to the glycosyl hydrolase 22 family. Monomer.

The protein resides in the secreted. The enzyme catalyses Hydrolysis of (1-&gt;4)-beta-linkages between N-acetylmuramic acid and N-acetyl-D-glucosamine residues in a peptidoglycan and between N-acetyl-D-glucosamine residues in chitodextrins.. The protein is Lysozyme-like protein 1 (Lyzl1) of Mus musculus (Mouse).